Consider the following 226-residue polypeptide: MEPVKNLARLSRTLGYEFTNQELLVQALTHRSAANKHNERLEFLGDSILSIVISDALYHQFPKATEGDLSRMRATLVKGETLTLIAKEFKLGDYLFLGPGELKSGGFRRESILADAVEAIIGAVYLDANMQACETLLLSWYKVRLDEIKPGINQKDPKTILQEYLQGYKKPLPDYQVVQVDGEAHDQTFTVECRIQDLDEVVTGVGSSRRKAEQLAAAQILELINK.

The RNase III domain maps to 7-129; sequence LARLSRTLGY…IIGAVYLDAN (123 aa). Residue Glu42 coordinates Mg(2+). Residue Asp46 is part of the active site. Mg(2+) is bound by residues Asp115 and Glu118. Residue Glu118 is part of the active site. A DRBM domain is found at 156–226; that stretch reads DPKTILQEYL…AAQILELINK (71 aa).

This sequence belongs to the ribonuclease III family. In terms of assembly, homodimer. It depends on Mg(2+) as a cofactor.

It is found in the cytoplasm. The enzyme catalyses Endonucleolytic cleavage to 5'-phosphomonoester.. Functionally, digests double-stranded RNA. Involved in the processing of primary rRNA transcript to yield the immediate precursors to the large and small rRNAs (23S and 16S). Processes some mRNAs, and tRNAs when they are encoded in the rRNA operon. Processes pre-crRNA and tracrRNA of type II CRISPR loci if present in the organism. This is Ribonuclease 3 from Shewanella denitrificans (strain OS217 / ATCC BAA-1090 / DSM 15013).